The sequence spans 179 residues: Protein GrpE (179 aa).

The disordered stretch occupies residues 1–20 (MSEETKEEIKNEKVDEEVTE).

It belongs to the GrpE family. As to quaternary structure, homodimer.

It is found in the cytoplasm. Functionally, participates actively in the response to hyperosmotic and heat shock by preventing the aggregation of stress-denatured proteins, in association with DnaK and GrpE. It is the nucleotide exchange factor for DnaK and may function as a thermosensor. Unfolded proteins bind initially to DnaJ; upon interaction with the DnaJ-bound protein, DnaK hydrolyzes its bound ATP, resulting in the formation of a stable complex. GrpE releases ADP from DnaK; ATP binding to DnaK triggers the release of the substrate protein, thus completing the reaction cycle. Several rounds of ATP-dependent interactions between DnaJ, DnaK and GrpE are required for fully efficient folding. This chain is Protein GrpE, found in Lactococcus lactis subsp. cremoris (strain MG1363).